Consider the following 183-residue polypeptide: UPF0398 protein PEPE_0933 (183 aa).

Belongs to the UPF0398 family.

In Pediococcus pentosaceus (strain ATCC 25745 / CCUG 21536 / LMG 10740 / 183-1w), this protein is UPF0398 protein PEPE_0933.